The chain runs to 264 residues: Apolipoprotein A-I (264 aa).

The signal sequence occupies residues 1-18; the sequence is MRVVVVTLALLFLTGTQA. 2 repeat units span residues 67-88 and 89-110. A 10 X approximate tandem repeats region spans residues 67–264; it reads LKLADNLDTL…LLDELQKTVA (198 aa). A 3; half-length repeat occupies 111 to 121; that stretch reads KDLEEVKEKIR. 5 tandem repeats follow at residues 122-143, 144-165, 166-187, 188-209, and 210-231. A 9; half-length repeat occupies 232–242; that stretch reads PLVQDFKERLT. The stretch at 243–264 is repeat 10; that stretch reads PYAENLKTRFISLLDELQKTVA.

The protein belongs to the apolipoprotein A1/A4/E family. As to expression, major protein of plasma HDL, also found in chylomicrons.

Its subcellular location is the secreted. Participates in the reverse transport of cholesterol from tissues to the liver for excretion by promoting cholesterol efflux from tissues and by acting as a cofactor for the lecithin cholesterol acyltransferase (LCAT). This is Apolipoprotein A-I (APOA1) from Anas platyrhynchos (Mallard).